The sequence spans 146 residues: VHLTGEEKSAVTTLWGKVNVEEVGGEALGRLLVVYPWTQRFFDSFGDLSSPDAVMNNPKVKAHGKKVLGAFSDGLAHLDNLKGTFAQLSELHCDKLHVDPENFRLLGNVLVCVLAHHFGKEFTPQVQAAYQKVVAGVANALAHKYH.

Val1 is modified (N-acetylvaline). The Globin domain occupies 2–146 (HLTGEEKSAV…VANALAHKYH (145 aa)). A Phosphothreonine modification is found at Thr12. The residue at position 44 (Ser44) is a Phosphoserine. Lys59 carries the N6-acetyllysine modification. His63 contributes to the heme b binding site. Lys82 is modified (N6-acetyllysine). Residue His92 coordinates heme b. An S-nitrosocysteine modification is found at Cys93. At Lys144 the chain carries N6-acetyllysine.

This sequence belongs to the globin family. Heterotetramer of two alpha chains and two beta chains. As to expression, red blood cells.

Its function is as follows. Involved in oxygen transport from the lung to the various peripheral tissues. In Saguinus mystax (Moustached tamarin), this protein is Hemoglobin subunit beta (HBB).